A 288-amino-acid chain; its full sequence is MALFQKKKYIKINPNRSIIEKQAEHPEVPDELFAKCPACKHTIYQKDLGKNKVCPNCDYNFRITAKERLAIVADKDSFVEMFTGIDSKNPLDFPGYPEKLAATKARTGLDEAIMTGVATIKGQKTALAIMDSTFIMASMGTVVGEKLTRLFEHATTEKLPIIVFTASGGARMQEGIMSLMQMAKTSAAVKRHSNAGLFYITVLTDPTTGGVTASFASLGDIILAEPQSLIGFAGRRVIEQTVRQTLPDDFQKAEFLLNHGFVDAIVKRNELRQKLALLLELHTEVENV.

The CoA carboxyltransferase N-terminal domain occupies 32-288 (LFAKCPACKH…LELHTEVENV (257 aa)). Positions 36, 39, 54, and 57 each coordinate Zn(2+). The segment at 36 to 57 (CPACKHTIYQKDLGKNKVCPNC) adopts a C4-type zinc-finger fold.

Belongs to the AccD/PCCB family. Acetyl-CoA carboxylase is a heterohexamer composed of biotin carboxyl carrier protein (AccB), biotin carboxylase (AccC) and two subunits each of ACCase subunit alpha (AccA) and ACCase subunit beta (AccD). Zn(2+) serves as cofactor.

Its subcellular location is the cytoplasm. It carries out the reaction N(6)-carboxybiotinyl-L-lysyl-[protein] + acetyl-CoA = N(6)-biotinyl-L-lysyl-[protein] + malonyl-CoA. Its pathway is lipid metabolism; malonyl-CoA biosynthesis; malonyl-CoA from acetyl-CoA: step 1/1. In terms of biological role, component of the acetyl coenzyme A carboxylase (ACC) complex. Biotin carboxylase (BC) catalyzes the carboxylation of biotin on its carrier protein (BCCP) and then the CO(2) group is transferred by the transcarboxylase to acetyl-CoA to form malonyl-CoA. This chain is Acetyl-coenzyme A carboxylase carboxyl transferase subunit beta, found in Lactococcus lactis subsp. cremoris (strain SK11).